A 183-amino-acid polypeptide reads, in one-letter code: Capsid protein (183 aa).

Residues 136-183 form a disordered region; the sequence is NAPILSTLPETTVVRRRGRSPRRRTPSPRRRRSQSPRRRRSQSRESQC. A compositionally biased stretch (basic residues) spans 149–176; it reads VRRRGRSPRRRTPSPRRRRSQSPRRRRS. Phosphoserine; by host occurs at positions 155, 162, and 170. Residues 155 to 161 form a 1; half-length repeat; it reads SPRRRTP. The tract at residues 155–177 is 3 X 8 AA repeats of S-P-R-R-R-[PR]-S-Q; the sequence is SPRRRTPSPRRRRSQSPRRRRSQ. Positions 158-175 match the Bipartite nuclear localization signal motif; the sequence is RRTPSPRRRRSQSPRRRR. A run of 2 repeats spans residues 162–169 and 170–177. The tract at residues 177-183 is RNA binding; the sequence is QSRESQC.

This sequence belongs to the orthohepadnavirus core antigen family. Homodimerizes, then multimerizes. Interacts with cytosol exposed regions of viral L glycoprotein present in the reticulum-to-Golgi compartment. Interacts with human FLNB. Phosphorylated form interacts with host importin alpha; this interaction depends on the exposure of the NLS, which itself depends upon genome maturation and/or phosphorylation of the capsid protein. Interacts with host NUP153. In terms of processing, phosphorylated by host SRPK1, SRPK2, and maybe protein kinase C or GAPDH. Phosphorylation is critical for pregenomic RNA packaging. Protein kinase C phosphorylation is stimulated by HBx protein and may play a role in transport of the viral genome to the nucleus at the late step during the viral replication cycle.

The protein resides in the virion. Its subcellular location is the host cytoplasm. Self assembles to form an icosahedral capsid. Most capsids appear to be large particles with an icosahedral symmetry of T=4 and consist of 240 copies of capsid protein, though a fraction forms smaller T=3 particles consisting of 180 capsid proteins. Entering capsids are transported along microtubules to the nucleus. Phosphorylation of the capsid is thought to induce exposure of nuclear localization signal in the C-terminal portion of the capsid protein that allows binding to the nuclear pore complex via the importin (karyopherin-) alpha and beta. Capsids are imported in intact form through the nuclear pore into the nuclear basket, where it probably binds NUP153. Only capsids that contain the mature viral genome can release the viral DNA and capsid protein into the nucleoplasm. Immature capsids get stuck in the basket. Capsids encapsulate the pre-genomic RNA and the P protein. Pre-genomic RNA is reverse-transcribed into DNA while the capsid is still in the cytoplasm. The capsid can then either be directed to the nucleus, providing more genomes for transcription, or bud through the endoplasmic reticulum to provide new virions. The sequence is that of Capsid protein from Hepatitis B virus genotype B/C subtype adw (isolate Okinawa/pODW282/1998) (HBV-B).